Consider the following 794-residue polypeptide: Signal transducer and activator of transcription 5A (794 aa).

Position 90 is a phosphotyrosine (Y90). Phosphoserine is present on residues S128 and S193. The 98-residue stretch at W589–V686 folds into the SH2 domain. Residue Y682 is modified to Phosphotyrosine. Y694 is modified (phosphotyrosine; by JAK2). The tract at residues D773–S794 is disordered. The residue at position 780 (S780) is a Phosphoserine.

The protein belongs to the transcription factor STAT family. In terms of assembly, forms a homodimer or a heterodimer with a related family member. Binds NR3C1. Interacts with NCOA1 and SOCS7. Interacts with ERBB4. Interacts with EBF4. Interacts with CD69. In terms of processing, tyrosine phosphorylated in response to KITLG/SCF, IL2, IL3, IL7, IL15, CSF2/GMCSF, GH1, PRL, EPO and THPO. Activated KIT promotes phosphorylation on tyrosine residues and subsequent translocation to the nucleus. Tyrosine phosphorylated in response to constitutively activated FGFR1, FGFR2, FGFR3 and FGFR4. Tyrosine phosphorylation is required for DNA-binding activity and dimerization. Serine phosphorylation is also required for maximal transcriptional activity. Tyrosine phosphorylated in response to signaling via activated FLT3; wild-type FLT3 results in much weaker phosphorylation than constitutively activated mutant FLT3. Alternatively, can be phosphorylated by JAK2 at Tyr-694. ISGylated.

It is found in the cytoplasm. Its subcellular location is the nucleus. Carries out a dual function: signal transduction and activation of transcription. Mediates cellular responses to the cytokine KITLG/SCF and other growth factors. Mediates cellular responses to ERBB4. May mediate cellular responses to activated FGFR1, FGFR2, FGFR3 and FGFR4. Binds to the GAS element and activates PRL-induced transcription. Regulates the expression of milk proteins during lactation. The chain is Signal transducer and activator of transcription 5A (STAT5A) from Homo sapiens (Human).